Reading from the N-terminus, the 368-residue chain is Protein tesmin/TSO1-like CXC 8 (368 aa).

The CRC domain maps to 64–185 (KHKGCRCKQS…KCINCKNVSE (122 aa)).

The protein belongs to the lin-54 family.

The protein resides in the nucleus. Its function is as follows. Plays a role in development of both male and female reproductive tissues. The sequence is that of Protein tesmin/TSO1-like CXC 8 (TCX8) from Arabidopsis thaliana (Mouse-ear cress).